We begin with the raw amino-acid sequence, 329 residues long: Serine dehydratase-like (329 aa).

Met-1 carries the post-translational modification N-acetylmethionine. At Lys-48 the chain carries N6-(pyridoxal phosphate)lysine.

The protein belongs to the serine/threonine dehydratase family. In terms of assembly, monomer. Homodimer. Pyridoxal 5'-phosphate serves as cofactor.

The enzyme catalyses L-serine = pyruvate + NH4(+). It catalyses the reaction L-threonine = 2-oxobutanoate + NH4(+). It carries out the reaction L-glutamate = D-glutamate. Its activity is regulated as follows. Serine dehydratase activity is inhibited by manganese chloride, ferrous chloride, cobalt chloride, cupric chloride, nickel chloride and zinc chloride. Glutamate racemase activity is inhibited by manganese chloride, ferrous chloride, cupric chloride and zinc chloride. Catalyzes the pyridoxal-phosphate-dependent dehydrative deamination of L-threonine and L-serine to ammonia and alpha-ketobutyrate and pyruvate, respectively. Also exhibits racemase activity towards L-glutamate and D-glutamate. This Rattus norvegicus (Rat) protein is Serine dehydratase-like (Sdsl).